Consider the following 192-residue polypeptide: Shikimate kinase (192 aa).

26–31 provides a ligand contact to ATP; that stretch reads ASGKSS. Ser-30 is a Mg(2+) binding site. Substrate-binding residues include Asp-48, Arg-72, and Gly-94. Arg-132 contacts ATP. Arg-151 lines the substrate pocket.

The protein belongs to the shikimate kinase family. As to quaternary structure, monomer. It depends on Mg(2+) as a cofactor.

It is found in the cytoplasm. It carries out the reaction shikimate + ATP = 3-phosphoshikimate + ADP + H(+). It functions in the pathway metabolic intermediate biosynthesis; chorismate biosynthesis; chorismate from D-erythrose 4-phosphate and phosphoenolpyruvate: step 5/7. Its function is as follows. Catalyzes the specific phosphorylation of the 3-hydroxyl group of shikimic acid using ATP as a cosubstrate. This is Shikimate kinase from Prochlorococcus marinus (strain MIT 9313).